Consider the following 235-residue polypeptide: 5'-methylthioadenosine/S-adenosylhomocysteine nucleosidase (235 aa).

The active-site Proton acceptor is Glu13. Substrate contacts are provided by residues Gly79, Met154, and 175–176; that span reads ME. Asp199 functions as the Proton donor in the catalytic mechanism.

The protein belongs to the PNP/UDP phosphorylase family. MtnN subfamily.

It carries out the reaction S-adenosyl-L-homocysteine + H2O = S-(5-deoxy-D-ribos-5-yl)-L-homocysteine + adenine. It catalyses the reaction S-methyl-5'-thioadenosine + H2O = 5-(methylsulfanyl)-D-ribose + adenine. The enzyme catalyses 5'-deoxyadenosine + H2O = 5-deoxy-D-ribose + adenine. It participates in amino-acid biosynthesis; L-methionine biosynthesis via salvage pathway; S-methyl-5-thio-alpha-D-ribose 1-phosphate from S-methyl-5'-thioadenosine (hydrolase route): step 1/2. Its function is as follows. Catalyzes the irreversible cleavage of the glycosidic bond in both 5'-methylthioadenosine (MTA) and S-adenosylhomocysteine (SAH/AdoHcy) to adenine and the corresponding thioribose, 5'-methylthioribose and S-ribosylhomocysteine, respectively. Also cleaves 5'-deoxyadenosine, a toxic by-product of radical S-adenosylmethionine (SAM) enzymes, into 5-deoxyribose and adenine. This is 5'-methylthioadenosine/S-adenosylhomocysteine nucleosidase from Chromohalobacter salexigens (strain ATCC BAA-138 / DSM 3043 / CIP 106854 / NCIMB 13768 / 1H11).